The following is a 277-amino-acid chain: Probable endonuclease 4 (277 aa).

The Zn(2+) site is built by His69, His109, Glu145, Asp179, His182, His214, Asp227, His229, and Glu259.

Belongs to the AP endonuclease 2 family. Zn(2+) is required as a cofactor.

It carries out the reaction Endonucleolytic cleavage to 5'-phosphooligonucleotide end-products.. Endonuclease IV plays a role in DNA repair. It cleaves phosphodiester bonds at apurinic or apyrimidinic (AP) sites, generating a 3'-hydroxyl group and a 5'-terminal sugar phosphate. This Bacteroides thetaiotaomicron (strain ATCC 29148 / DSM 2079 / JCM 5827 / CCUG 10774 / NCTC 10582 / VPI-5482 / E50) protein is Probable endonuclease 4.